The chain runs to 160 residues: MITLYEAAIKTLITHRKQILKHPDSREILLALGLYWDKTHILVKCRECGKMSLTGKHSTKCININCLLILAIKKKNKRMVDTLIRMGADVTYIHLLKNKIKLSYNQLSMLKSNSQISLKELHAICYLLYGRLPKKIKQGMQLCKTMAGLCGELLCAFLAP.

This sequence belongs to the asfivirus MGF 300 family.

In terms of biological role, plays a role in virus cell tropism, and may be required for efficient virus replication in macrophages. The chain is Protein MGF 300-2R from African swine fever virus (isolate Tick/South Africa/Pretoriuskop Pr4/1996) (ASFV).